The chain runs to 320 residues: N-acetylneuraminate lyase (320 aa).

Positions 51 and 52 each coordinate aceneuramate. Tyr-143 (proton donor) is an active-site residue. Lys-173 functions as the Schiff-base intermediate with substrate in the catalytic mechanism. Residues Thr-175, Gly-199, Asp-201, Glu-202, and Ser-218 each coordinate aceneuramate. Ser-308 carries the phosphoserine modification.

Belongs to the DapA family. NanA subfamily. As to quaternary structure, homotetramer.

The protein localises to the cytoplasm. The catalysed reaction is aceneuramate = aldehydo-N-acetyl-D-mannosamine + pyruvate. The protein operates within amino-sugar metabolism; N-acetylneuraminate degradation. Its function is as follows. Catalyzes the cleavage of N-acetylneuraminic acid (sialic acid) to form pyruvate and N-acetylmannosamine via a Schiff base intermediate. It prevents sialic acids from being recycled and returning to the cell surface. Involved in the N-glycolylneuraminic acid (Neu5Gc) degradation pathway. The polypeptide is N-acetylneuraminate lyase (Mus musculus (Mouse)).